Here is a 308-residue protein sequence, read N- to C-terminus: MSSKHVAVLLGGFSSERPVSLSSGTACADALEGEGYRVTRVDVGHDVAAVLQELRPDVVFNALHGPFGEDGTIQGILEYLEIPYTHSGVLASALAMDKAQAKHVAKAAGIPVAEAVVMDRRSFGNQHPMKPPYVVKPVREGSSFGVVIVKEDQSHPPQVITSSDWRYGDRIMVERYVAGREFTCGVMGDVALGVTEIIPQGHAFYDYDSKYVKGGSKHVIPAQVSPNIYQKIQTLALKAHQAIGCRGVSRSDFRFDDRGDGEGELIWLEINTQPGMTPTSLVPEMAQHAGLRFGEFLRWMVEDASCLR.

The ATP-grasp domain maps to Lys102 to Glu302. Pro128–Thr183 lines the ATP pocket. The Mg(2+) site is built by Asp252, Glu269, and Asn271.

Belongs to the D-alanine--D-alanine ligase family. Mg(2+) serves as cofactor. Requires Mn(2+) as cofactor.

The protein resides in the cytoplasm. The enzyme catalyses 2 D-alanine + ATP = D-alanyl-D-alanine + ADP + phosphate + H(+). It participates in cell wall biogenesis; peptidoglycan biosynthesis. Its function is as follows. Cell wall formation. The protein is D-alanine--D-alanine ligase of Sinorhizobium medicae (strain WSM419) (Ensifer medicae).